A 397-amino-acid chain; its full sequence is MSLSQQSISIIKATVPVLQVHGVNITTTFYRNMFKANPQLLNIFNHSNQREGKQQNALANTVLQAAIHIDKLNELNLAPIVHKHVALGVLPEHYPIVGTNLLGAIKEVLQDAATDEILGAWGEAYGVIAQAFIDAEAALYKVTEEQIGGWRDTREFIVDRKVEESSNIISFYFKPADGKPIATYIPGQYITIKVPLTLENGEQRTHIRHYSLSDTPSEQYYRISVKKEDALKKSDPNGVVSNHLHANVKVGDKVLLSPPAGDYVVDQLSSNPILLVSGGVGITPLLSMAKATLAKQPEREVTFVHSSKNKQYQPFANELSQLEKSNKVKVSTVHSETDGQITKDKLEKFINPSQIKDTKVFICGPVSFMSAINKQLIELGYPKENISYEIFGPLTNV.

The 136-residue stretch at 2–137 folds into the Globin domain; that stretch reads SLSQQSISII…IAQAFIDAEA (136 aa). His84 is a binding site for heme b. Active-site charge relay system residues include Tyr94 and Glu136. The segment at 150 to 397 is reductase; sequence WRDTREFIVD…YEIFGPLTNV (248 aa). The FAD-binding FR-type domain occupies 151 to 266; it reads RDTREFIVDR…SPPAGDYVVD (116 aa). FAD is bound by residues Tyr189 and 208–211; that span reads RHYS. 279 to 284 contributes to the NADP(+) binding site; that stretch reads GVGITP. FAD is bound at residue 390–393; the sequence is IFGP.

The protein belongs to the globin family. Two-domain flavohemoproteins subfamily. It in the C-terminal section; belongs to the flavoprotein pyridine nucleotide cytochrome reductase family. FAD serves as cofactor. Requires heme b as cofactor.

It is found in the cytoplasm. It carries out the reaction 2 nitric oxide + NADPH + 2 O2 = 2 nitrate + NADP(+) + H(+). The enzyme catalyses 2 nitric oxide + NADH + 2 O2 = 2 nitrate + NAD(+) + H(+). Functionally, is involved in NO detoxification in an aerobic process, termed nitric oxide dioxygenase (NOD) reaction that utilizes O(2) and NAD(P)H to convert NO to nitrate, which protects the cell from various noxious nitrogen compounds. Therefore, plays a central role in the inducible response to nitrosative stress. In the presence of oxygen and NADH, it has NADH oxidase activity, which leads to the generation of superoxide and H(2)O(2). Under anaerobic conditions, it also exhibits nitric oxide reductase and FAD reductase activities. However, all these reactions are much lower than NOD activity. The protein is Flavohemoprotein A (fhbA) of Dictyostelium discoideum (Social amoeba).